Here is an 80-residue protein sequence, read N- to C-terminus: Large ribosomal subunit protein bL31B (80 aa).

This sequence belongs to the bacterial ribosomal protein bL31 family. Type B subfamily. In terms of assembly, part of the 50S ribosomal subunit.

In Streptococcus thermophilus (strain CNRZ 1066), this protein is Large ribosomal subunit protein bL31B.